The following is a 445-amino-acid chain: POU domain, class 5, transcription factor 1.2 (445 aa).

Composition is skewed to polar residues over residues 76-88 and 164-182; these read SANQ…QGNP and IFTS…SLDN. Disordered stretches follow at residues 76–116 and 139–227; these read SANQ…PSLP and TTVV…GEME. Low complexity predominate over residues 183 to 200; the sequence is SRCSSATSSSSGGTNVGT. In terms of domain architecture, POU-specific spans 218-292; that stretch reads EEAPNSGEME…LLRSWLHEVE (75 aa). Residues 312–371 constitute a DNA-binding region (homeobox); sequence KRKHRTSIENNVKCTLENYFMQCSKPSAQEIAQIARELNMEKDVVRVWFCNRRQKGKRQV.

Belongs to the POU transcription factor family. Class-5 subfamily. In terms of assembly, interacts with the transcription factors tcf7l1/tcf3 and vegt. Initially (stage 9) expressed in all regions of the embryo, becoming localized to the ventroposterior regions by early neurula stages. In adults, expressed at a low level in the brain.

Its subcellular location is the nucleus. Transcription factor that binds to the octamer motif (5'-ATTTGCAT-3'). Antagonizes the activity of nodal/activin signaling during gastrulation to suppress mesendoderm formation. This Xenopus laevis (African clawed frog) protein is POU domain, class 5, transcription factor 1.2 (pou5f1.2).